We begin with the raw amino-acid sequence, 439 residues long: GTPase Der (439 aa).

EngA-type G domains are found at residues proline 4–glutamate 168 and isoleucine 177–threonine 352. Residues glycine 10–serine 17, aspartate 57–isoleucine 61, asparagine 120–aspartate 123, glycine 183–serine 190, aspartate 230–leucine 234, and asparagine 295–aspartate 298 contribute to the GTP site. The KH-like domain occupies lysine 353–lysine 437.

This sequence belongs to the TRAFAC class TrmE-Era-EngA-EngB-Septin-like GTPase superfamily. EngA (Der) GTPase family. In terms of assembly, associates with the 50S ribosomal subunit.

Its function is as follows. GTPase that plays an essential role in the late steps of ribosome biogenesis. The polypeptide is GTPase Der (Clostridium botulinum (strain Okra / Type B1)).